The primary structure comprises 176 residues: MAAASPVCGSQASAVGASSPPAPAPAPAAGLGRCRMALLLAVALDVAGMAALLTGVFAQLQVRGRDFGDLLIYSGALLVFLSLLGWILWYTGNIEISRQELERDYGLRPSAIARLARKLSRRWSAPATASPRTTAGLRSARRANRAPQPSSSGSRRVRLQLATLEAGSVAAGTGSE.

Residues 1 to 21 (MAAASPVCGSQASAVGASSPP) form a disordered region. Over 1–36 (MAAASPVCGSQASAVGASSPPAPAPAPAAGLGRCRM) the chain is Cytoplasmic. Positions 9 to 19 (GSQASAVGASS) are enriched in low complexity. Residues 37–57 (ALLLAVALDVAGMAALLTGVF) form a helical membrane-spanning segment. At 58–69 (AQLQVRGRDFGD) the chain is on the extracellular side. The helical transmembrane segment at 70–90 (LLIYSGALLVFLSLLGWILWY) threads the bilayer. The Cytoplasmic portion of the chain corresponds to 91 to 176 (TGNIEISRQE…GSVAAGTGSE (86 aa)). Residues 124 to 135 (SAPATASPRTTA) show a composition bias toward low complexity. The interval 124 to 156 (SAPATASPRTTAGLRSARRANRAPQPSSSGSRR) is disordered. Ser-175 is subject to Phosphoserine.

The protein resides in the membrane. This is Transmembrane protein 238 (Tmem238) from Mus musculus (Mouse).